Here is a 577-residue protein sequence, read N- to C-terminus: MYRAAASLASKARQAGNSLATRQVGSRLAWSRNYAAKDIKFGVEARALMLRGVEELADAVKVTMGPKGRNVVIEQSFGAPKVTKDGVTVAKSIEFKDRVKNVGASLVKQVANATNDTAGDGTTCATVLTKAIFTEGCKSVAAGMNAMDLRRGISMAVDAVVTNLKGMARMISTSEEIAQVGTISANGEREIGELIAKAMEKVGKEGVITIADGNTLYNELEVVEGMKLDRGYISPYFITNSKTQKCELEDPLILIHDKKVTNMHAVVKVLEMALKKQKPLLIVAEDVESEALGTLIINKLRAGIKVCAVKAPGFGENRKANLQDLAILTGGEVITEELGMNLENFEPHMLGTCKKVTVSKDDTVILDGAGDKKSIEERAEQIRSAIENSTSDYDKEKLQERLAKLSGGVAVLKIGGASEAEVGEKKDRVTDALNATKAAVEEGIVPGGGVALLYASKELDKLQTANFDQKIGVQIIQNALKTPVHTIASNAGVEGAVVVGKLLEQENTDLGYDAAKGEYVDMVKTGIIDPLKVIRTALVDAASVSSLMTTTESIIVEIPKEEAPAPAMGGGMGGMDY.

The transit peptide at 1-34 (MYRAAASLASKARQAGNSLATRQVGSRLAWSRNY) directs the protein to the mitochondrion.

Belongs to the chaperonin (HSP60) family.

The protein resides in the mitochondrion. In terms of biological role, implicated in mitochondrial protein import and macromolecular assembly. May facilitate the correct folding of imported proteins. May also prevent misfolding and promote the refolding and proper assembly of unfolded polypeptides generated under stress conditions in the mitochondrial matrix. The chain is Chaperonin CPN60-1, mitochondrial (CPN60I) from Zea mays (Maize).